Consider the following 350-residue polypeptide: Hydroxymethylglutaryl-CoA synthase (350 aa).

Glu83 serves as the catalytic Proton donor/acceptor. The active-site Acyl-thioester intermediate is the Cys115. Cys115 and Thr156 together coordinate (3S)-3-hydroxy-3-methylglutaryl-CoA. Residue Arg204 participates in CoA binding. Residues Thr206 and His239 each coordinate (3S)-3-hydroxy-3-methylglutaryl-CoA. His239 functions as the Proton donor/acceptor in the catalytic mechanism. Residue Lys244 participates in CoA binding. The (3S)-3-hydroxy-3-methylglutaryl-CoA site is built by Asn271 and Ser301.

Belongs to the thiolase-like superfamily. Archaeal HMG-CoA synthase family. Interacts with acetoacetyl-CoA thiolase that catalyzes the precedent step in the pathway and with a DUF35 protein. The acetoacetyl-CoA thiolase/HMG-CoA synthase complex channels the intermediate via a fused CoA-binding site, which allows for efficient coupling of the endergonic thiolase reaction with the exergonic HMGCS reaction.

The enzyme catalyses acetoacetyl-CoA + acetyl-CoA + H2O = (3S)-3-hydroxy-3-methylglutaryl-CoA + CoA + H(+). It functions in the pathway metabolic intermediate biosynthesis; (R)-mevalonate biosynthesis; (R)-mevalonate from acetyl-CoA: step 2/3. Its function is as follows. Catalyzes the condensation of acetyl-CoA with acetoacetyl-CoA to form 3-hydroxy-3-methylglutaryl-CoA (HMG-CoA). Functions in the mevalonate (MVA) pathway leading to isopentenyl diphosphate (IPP), a key precursor for the biosynthesis of isoprenoid compounds that are building blocks of archaeal membrane lipids. This is Hydroxymethylglutaryl-CoA synthase from Thermococcus onnurineus (strain NA1).